Here is a 919-residue protein sequence, read N- to C-terminus: Exostosin-like 3 (919 aa).

Topologically, residues 1–30 (MTGYTMLRNGGAGNGGQTCMLRWSNRIRLT) are cytoplasmic. Positions 1–140 (MTGYTMLRNG…LKNVISQTEH (140 aa)) are required for interaction with REG3A. A helical; Signal-anchor for type II membrane protein transmembrane segment spans residues 31–51 (WLSFTLFVILVFFPLIAHYYL). At 52–919 (TTLDEADEAG…HDKTKCFKFI (868 aa)) the chain is on the lumenal side. 2 cysteine pairs are disulfide-bonded: C177–C182 and C188–C236. N290 carries an N-linked (GlcNAc...) asparagine glycan. Phosphoserine is present on S362. A disulfide bond links C400 and C415. N592 is a glycosylation site (N-linked (GlcNAc...) asparagine). Residues L668, R672, N697, N723, R728, D744, D745, and D746 each coordinate UDP-N-acetyl-alpha-D-glucosamine. D746 contributes to the Mn(2+) binding site. Residue N790 is glycosylated (N-linked (GlcNAc...) asparagine). An intrachain disulfide couples C831 to C879. Residues E832, D833, and R876 each coordinate UDP-N-acetyl-alpha-D-glucosamine. D833 is an active-site residue.

This sequence belongs to the glycosyltransferase 47 family. Homodimer; disulfide-linked. Interacts with REG3A. The cofactor is Mn(2+). As to expression, ubiquitous. Expressed in keratinocytes. Expressed in pancreas.

The protein localises to the endoplasmic reticulum membrane. The protein resides in the golgi apparatus. It localises to the cell membrane. Its subcellular location is the nucleus. It catalyses the reaction 3-O-(beta-D-GlcA-(1-&gt;3)-beta-D-Gal-(1-&gt;3)-beta-D-Gal-(1-&gt;4)-beta-D-Xyl)-L-seryl-[protein] + UDP-N-acetyl-alpha-D-glucosamine = 3-O-(alpha-D-GlcNAc-(1-&gt;4)-beta-D-GlcA-(1-&gt;3)-beta-D-Gal-(1-&gt;3)-beta-D-Gal-(1-&gt;4)-beta-D-Xyl)-L-seryl-[protein] + UDP + H(+). It functions in the pathway glycan metabolism; heparan sulfate biosynthesis. Glycosyltransferase which regulates the biosynthesis of heparan sulfate (HS). Initiates HS synthesis by transferring the first N-acetyl-alpha-D-glucosamine (alpha-GlcNAc) residue (GlcNAcT-I activity) to the tetrasaccharide linker (GlcA-Gal-Gal-Xyl-)Ser core linker. May also transfer alpha-GlcNAc residues during HS elongation (GlcNAcT-II activity). Lacks glucuronyl transferase II (GlcAT-II) activity. Important for both skeletal development and hematopoiesis, through the formation of HS proteoglycans (HSPGs). Through the synthesis of HS, regulates postnatal pancreatic islet maturation and insulin secretion. Functionally, receptor for REG3A, REG3B and REG3G, induces the activation of downstream signaling pathways such as PI3K-AKT or RAS-RAF-MEK-ERK signaling pathway. Required for the function of REG3A in regulating keratinocyte proliferation and differentiation. Required for the inhibition of skin inflammation mediated by REG3A through the activation of PI3K-AKT-STAT3 pathway. Required for the function of REG3A and REG3G in glucose tolerance in pancreas. Expressed in microglia, is activated by nociceptor-derived REG3G in response to endotoxins, leading to the inhibition of kynurenine pathway to prevent endotoxic death. The polypeptide is Exostosin-like 3 (Homo sapiens (Human)).